The primary structure comprises 342 residues: 4-hydroxy-2-oxovalerate aldolase (342 aa).

The Pyruvate carboxyltransferase domain maps to 7 to 257 (IWITEVALRD…KTGVDLYKMM (251 aa)). 15-16 (RD) serves as a coordination point for substrate. D16 provides a ligand contact to Mn(2+). H19 acts as the Proton acceptor in catalysis. Residues S169 and H196 each contribute to the substrate site. Residues H196 and H198 each coordinate Mn(2+). Position 287 (Y287) interacts with substrate.

It belongs to the 4-hydroxy-2-oxovalerate aldolase family.

It carries out the reaction (S)-4-hydroxy-2-oxopentanoate = acetaldehyde + pyruvate. In Geobacillus thermodenitrificans (strain NG80-2), this protein is 4-hydroxy-2-oxovalerate aldolase (nbaI).